A 437-amino-acid chain; its full sequence is MTTFSPREIVSELDRFIVGQKDAKRAVAIALRNRWRRQQLKGPLRDEVAPKNILMIGPTGCGKTEIARRLARLAGAPFLKVEATKFTEVGYVGRDVEQIVRDLVEVGIGLTREEKRKAVKAKAEAAAESRILDALVGPTASQATRESFRKKLRNSELDDKEVEIELAPSGPQGMPMFEIPGMPGASMGAINISDMLGKALGGQRGKPRRITVADAYAPLIAEESDKLVDDDALTREAIREVEDNGIVFLDEIDKICAREGRSGADVSREGVQRDLLPLIEGTTVATKHGPVKTDHILFIASGAFHVSKPSDLLPELQGRLPIRVELQPLTVEDFKQILTATEASLIKQTVALMETEGVTLDFTEDAIDALARVAVEVNGSVENIGARRLQTVLERVIDEISFTATDRSGETVPIDAGYVRERVADLAANTDLSRFIL.

Residues Val18, 60–65 (GCGKTE), Asp250, Glu315, and Arg387 each bind ATP.

The protein belongs to the ClpX chaperone family. HslU subfamily. A double ring-shaped homohexamer of HslV is capped on each side by a ring-shaped HslU homohexamer. The assembly of the HslU/HslV complex is dependent on binding of ATP.

The protein resides in the cytoplasm. In terms of biological role, ATPase subunit of a proteasome-like degradation complex; this subunit has chaperone activity. The binding of ATP and its subsequent hydrolysis by HslU are essential for unfolding of protein substrates subsequently hydrolyzed by HslV. HslU recognizes the N-terminal part of its protein substrates and unfolds these before they are guided to HslV for hydrolysis. This is ATP-dependent protease ATPase subunit HslU from Methylorubrum populi (strain ATCC BAA-705 / NCIMB 13946 / BJ001) (Methylobacterium populi).